The chain runs to 346 residues: Histidinol-phosphate aminotransferase (346 aa).

At lysine 209 the chain carries N6-(pyridoxal phosphate)lysine.

The protein belongs to the class-II pyridoxal-phosphate-dependent aminotransferase family. Histidinol-phosphate aminotransferase subfamily. Homodimer. Requires pyridoxal 5'-phosphate as cofactor.

It catalyses the reaction L-histidinol phosphate + 2-oxoglutarate = 3-(imidazol-4-yl)-2-oxopropyl phosphate + L-glutamate. Its pathway is amino-acid biosynthesis; L-histidine biosynthesis; L-histidine from 5-phospho-alpha-D-ribose 1-diphosphate: step 7/9. In Vibrio vulnificus (strain CMCP6), this protein is Histidinol-phosphate aminotransferase.